We begin with the raw amino-acid sequence, 837 residues long: MSIGETIHREFIHLKLLLKKNFLVSIRSYFSTIIELLSPIVFVLIFYIIYSYGSAVDYSNVSYEQNLPNCIVSVENRCINLMFSPMNSTCTVEIMKILAKNNNMEIYNYPTDTGPLPNLENTIGFHGGIIAMDSLNSTEQFILAHPNVTLAVVDFENFPLNFTINGVKPNDSLIGFNDFYDLSFNVLLNLSTSGGFIEPVDYSIPVTTSIQKAIYDFYAINNQKQIPTINFDSTQFIEYSSVNVVSLFGGLFYYCAIMISFIFLLYKVAFEKEKNLKQGMVMMGLSRSMYWLSWVITSFTIDLIICLLLIAIGAICKLPFFLGTNFLVLLLNFFLFAISSSSMAFFMLTFIGKTKVAIGIGMAFFIVGSGLQLTFNSLGSLIFQIIYQTDSNGAAFVRVILFILPMFHFSKVLTDINDKVQSYPTSQFKISDLNDNLDGSQYGMDYLVPTTGQSLAYMFILVIVYLSLSAIIEYALSGGFSFKTVKHINVPHFDDQDVANATNRSLDPSNKSPFIIRGLSKTFNKFLRPSKSVHALKYLSLDIQEGTVLGLLGSNGAGKSTTIGILTGIHSPTSGDAIIYGHSVVKDIHSVRKITSVVPQDDILWLELTAMEHLHLFAELKGIPVRERDFQIAKVLEQVKLTKVANDQCSTFSGGMKRRLSVAIGCIGDPKIIFMDEPTTGLDPRSKRRIYTLVKEIKKDKVIILTSHDMHEIEILAQNLVILNDGIMVCNGNALQLKTKYGEGYSVQVIAKSLEVIPEIINFVTSSLPYCRFLKQSALQLNFGFPINTDPKIIVNFFKRLESITKDENNNLMRDWSISHSNMDDVFIKVSNKPKLQ.

A run of 7 helical transmembrane segments spans residues Y29–I49, V244–L264, L303–G323, F326–F346, V356–N376, G393–L413, and L455–A475. The ABC transporter domain occupies I516–I750. Residue G553–S560 coordinates ATP.

Belongs to the ABC transporter superfamily. ABCA family.

Its subcellular location is the membrane. The sequence is that of ABC transporter A family member 8 (abcA8) from Dictyostelium discoideum (Social amoeba).